Here is a 179-residue protein sequence, read N- to C-terminus: Inner membrane-spanning protein YciB (179 aa).

The next 6 membrane-spanning stretches (helical) occupy residues 3–23 (FLFDLFPVILFFAAFKLADIY), 24–44 (TATAVAIGATVLQIGWVWFRH), 49–69 (PMQWVSLLIIAVFGGATLVLH), 76–96 (WKPTVLYWMFAVGLLGSVIGW), 121–141 (AAWAGFFAAMGVLNLYVAYQF), and 149–169 (FKLFGSMGLMLVFIVAQSVWL).

The protein belongs to the YciB family.

The protein localises to the cell inner membrane. Functionally, plays a role in cell envelope biogenesis, maintenance of cell envelope integrity and membrane homeostasis. The polypeptide is Inner membrane-spanning protein YciB (Cupriavidus necator (strain ATCC 17699 / DSM 428 / KCTC 22496 / NCIMB 10442 / H16 / Stanier 337) (Ralstonia eutropha)).